We begin with the raw amino-acid sequence, 223 residues long: Deoxyribose-phosphate aldolase (223 aa).

Asp89 functions as the Proton donor/acceptor in the catalytic mechanism. Lys152 functions as the Schiff-base intermediate with acetaldehyde in the catalytic mechanism. The Proton donor/acceptor role is filled by Lys181.

This sequence belongs to the DeoC/FbaB aldolase family. DeoC type 1 subfamily.

The protein resides in the cytoplasm. The enzyme catalyses 2-deoxy-D-ribose 5-phosphate = D-glyceraldehyde 3-phosphate + acetaldehyde. It functions in the pathway carbohydrate degradation; 2-deoxy-D-ribose 1-phosphate degradation; D-glyceraldehyde 3-phosphate and acetaldehyde from 2-deoxy-alpha-D-ribose 1-phosphate: step 2/2. Functionally, catalyzes a reversible aldol reaction between acetaldehyde and D-glyceraldehyde 3-phosphate to generate 2-deoxy-D-ribose 5-phosphate. This Listeria monocytogenes serotype 4a (strain HCC23) protein is Deoxyribose-phosphate aldolase.